Consider the following 561-residue polypeptide: FAD-binding monooxygenase tazF (561 aa).

Residues Thr-74–Asp-77, Asp-86–Ile-87, and Tyr-92 contribute to the FAD site. Gly-84–Asp-86 is a binding site for NADP(+). NADP(+)-binding positions include Asn-212–Gln-218 and Arg-235–His-236.

This sequence belongs to the FAD-binding monooxygenase family. Requires FAD as cofactor.

It participates in secondary metabolite biosynthesis. Its function is as follows. FAD-binding monooxygenase; part of the gene cluster that mediates the biosynthesis of azaterrilone A and other azaphilones, a class of fungal metabolites characterized by a highly oxygenated pyrano-quinone bicyclic core and exhibiting a broad range of bioactivities. The first step of the pathway begins with the non-reducing polyketide synthase tazA that assembles one acetyl-CoA starter unit, five malonyl-CoA units, and catalyzes a series of Claisen condensations, methylation, PT-mediated cyclization, and finally releases the first hexaketide precursor through the R-domain. The tazA product then undergoes reduction on its terminal ketone and the following pyran-ring formation by yet undetermined enzyme(s). Dehydration and enoyl reduction, possibly involving the trans-enoyl reductase tazE leads to the next intermediate. TazD is predicted as an acetyltransferase and might catalyze the acetylation steps leading to the synthesis of azaterrilone A. Azaterrilone A is not the final product of the taz pathway and both the highly reducing polyketide synthase tazB and the dual enzyme tazHJ catalyze late steps of the pathway, leading to the production of the 2 final stereoisomers that contain additional polyketide modification whose structures have still to be determined. In Aspergillus terreus (strain NIH 2624 / FGSC A1156), this protein is FAD-binding monooxygenase tazF.